The primary structure comprises 167 residues: UPF0114 protein in repA1-repA2 intergenic region (167 aa).

The next 3 helical transmembrane spans lie at L15–F35, L53–V73, and I136–I156.

The protein belongs to the UPF0114 family.

The protein localises to the cell membrane. The sequence is that of UPF0114 protein in repA1-repA2 intergenic region from Buchnera aphidicola subsp. Diuraphis noxia.